A 390-amino-acid polypeptide reads, in one-letter code: Phosphopentomutase (390 aa).

Positions 12, 285, 290, 326, 327, and 338 each coordinate Mn(2+).

It belongs to the phosphopentomutase family. Mn(2+) serves as cofactor.

It is found in the cytoplasm. The catalysed reaction is 2-deoxy-alpha-D-ribose 1-phosphate = 2-deoxy-D-ribose 5-phosphate. It catalyses the reaction alpha-D-ribose 1-phosphate = D-ribose 5-phosphate. The protein operates within carbohydrate degradation; 2-deoxy-D-ribose 1-phosphate degradation; D-glyceraldehyde 3-phosphate and acetaldehyde from 2-deoxy-alpha-D-ribose 1-phosphate: step 1/2. Its function is as follows. Isomerase that catalyzes the conversion of deoxy-ribose 1-phosphate (dRib-1-P) and ribose 1-phosphate (Rib-1-P) to deoxy-ribose 5-phosphate (dRib-5-P) and ribose 5-phosphate (Rib-5-P), respectively. The sequence is that of Phosphopentomutase from Brevibacillus brevis (strain 47 / JCM 6285 / NBRC 100599).